Here is a 1054-residue protein sequence, read N- to C-terminus: NACHT, LRR and PYD domains-containing protein 12 (1054 aa).

The Pyrin domain occupies 1 to 95; the sequence is MLPSTARDGL…WERGQGEDLV (95 aa). One can recognise an FISNA domain in the interval 129 to 201; it reads YKDYVRRKFQ…SPIQMETLFE (73 aa). The NACHT domain occupies 211-528; that stretch reads HTVVLQGAAG…EFFAAMYCAL (318 aa). 217–224 is a binding site for ATP; sequence GAAGMGKS. LRR repeat units follow at residues 821-841, 850-871, 878-899, 907-928, 935-955, 964-985, 992-1013, and 1021-1042; these read YLVE…KLLC, RLRT…DLAS, SLLE…LLCE, KLQT…GIAS, CLQE…QLLG, RLQK…DLSS, TLHE…LLCK, and KLRV…RMAA.

It belongs to the NLRP family. As to quaternary structure, interacts (via pyrin domain) with ASC. Interacts (via pyrin domain) with FAF1 (via UBA domain). Interacts with MAP3K14; this interaction promotes proteasomal degradation of MAP3K14. Interacts with NOD2; this interaction promotes degradation of NOD2 through the ubiquitin-proteasome pathway. Interacts with HSPA1A and HSPA8. Interacts with HSP90AA1. Interacts with TRIM25; this interaction inhibits RIGI-mediated signaling pathway. In terms of tissue distribution, mainly expressed in dendritic cells (DCs) and neutrophils.

It localises to the cytoplasm. Functionally, plays an essential role as an potent mitigator of inflammation. Primarily expressed in dendritic cells and macrophages, inhibits both canonical and non-canonical NF-kappa-B and ERK activation pathways. Functions as a negative regulator of NOD2 by targeting it to degradation via the proteasome pathway. In turn, promotes bacterial tolerance. Also inhibits the RIGI-mediated immune signaling against RNA viruses by reducing the E3 ubiquitin ligase TRIM25-mediated 'Lys-63'-linked RIGI activation but enhancing the E3 ubiquitin ligase RNF125-mediated 'Lys-48'-linked RIGI degradation. Also acts as a negative regulator of inflammatory response to mitigate obesity and obesity-associated diseases in adipose tissue. The chain is NACHT, LRR and PYD domains-containing protein 12 (Nlrp12) from Mus musculus (Mouse).